The primary structure comprises 331 residues: 6-phosphogluconolactonase (331 aa).

An N6-acetyllysine modification is found at Lys-287.

The protein belongs to the cycloisomerase 2 family.

It carries out the reaction 6-phospho-D-glucono-1,5-lactone + H2O = 6-phospho-D-gluconate + H(+). The protein operates within carbohydrate degradation; pentose phosphate pathway; D-ribulose 5-phosphate from D-glucose 6-phosphate (oxidative stage): step 2/3. Its function is as follows. Catalyzes the hydrolysis of 6-phosphogluconolactone to 6-phosphogluconate. This is 6-phosphogluconolactonase from Escherichia coli O127:H6 (strain E2348/69 / EPEC).